Reading from the N-terminus, the 367-residue chain is D-alanine--D-alanine ligase (367 aa).

An ATP-grasp domain is found at 150–357 (KKLLTAAGLP…YPTLLATMVE (208 aa)). 178–233 (RERLGLPVFVKPSRGGSSIGVSRVTAWDALPAAIELARRHDPKVIVEAAIPGRELE) is an ATP binding site. Mg(2+)-binding residues include Asp-312, Glu-324, and Asn-326.

The protein belongs to the D-alanine--D-alanine ligase family. The cofactor is Mg(2+). It depends on Mn(2+) as a cofactor.

It is found in the cytoplasm. It carries out the reaction 2 D-alanine + ATP = D-alanyl-D-alanine + ADP + phosphate + H(+). It participates in cell wall biogenesis; peptidoglycan biosynthesis. In terms of biological role, cell wall formation. The polypeptide is D-alanine--D-alanine ligase (Mycolicibacterium vanbaalenii (strain DSM 7251 / JCM 13017 / BCRC 16820 / KCTC 9966 / NRRL B-24157 / PYR-1) (Mycobacterium vanbaalenii)).